A 274-amino-acid polypeptide reads, in one-letter code: Putative phosphoenolpyruvate synthase regulatory protein (274 aa).

154 to 161 provides a ligand contact to ADP; sequence AVSRSGKT.

It belongs to the pyruvate, phosphate/water dikinase regulatory protein family. PSRP subfamily.

The catalysed reaction is [pyruvate, water dikinase] + ADP = [pyruvate, water dikinase]-phosphate + AMP + H(+). It catalyses the reaction [pyruvate, water dikinase]-phosphate + phosphate + H(+) = [pyruvate, water dikinase] + diphosphate. In terms of biological role, bifunctional serine/threonine kinase and phosphorylase involved in the regulation of the phosphoenolpyruvate synthase (PEPS) by catalyzing its phosphorylation/dephosphorylation. The polypeptide is Putative phosphoenolpyruvate synthase regulatory protein (Alkalilimnicola ehrlichii (strain ATCC BAA-1101 / DSM 17681 / MLHE-1)).